A 952-amino-acid polypeptide reads, in one-letter code: Histone deacetylase 7 (952 aa).

Transcription repression stretches follow at residues 1–268 (MDLR…DSDR) and 218–546 (GPNP…EHAG). The segment at 49-149 (SMDTPMPELQ…LPSDPPEHFP (101 aa)) is interaction with MEF2A. Position 109 is a phosphoserine (S109). 2 disordered regions span residues 130-224 (LSSF…PILG) and 261-283 (PARA…ILGS). At S155 the chain carries Phosphoserine; by MARK2, MARK3 and PKD/PRKD1. Positions 167–181 (KSLERRKNPLLRKES) are enriched in basic and acidic residues. S181 carries the phosphoserine; by PKD/PRKD2 modification. Over residues 197–212 (SSPSSSSTPASGCSSP) the composition is skewed to low complexity. S283 bears the Phosphoserine mark. At T286 the chain carries Phosphothreonine. Disordered stretches follow at residues 349–377 (LHWP…MQPR), 389–441 (KRSA…GPAP), and 460–510 (LPRG…SSSE). Phosphoserine; by PKD/PRKD1 is present on S358. Residues 360 to 374 (PLPPSATAPPPPGPM) are compositionally biased toward pro residues. Phosphoserine occurs at positions 364, 405, 486, 487, and 507. Low complexity predominate over residues 482–503 (SRAQSSPAAPASLSAPEPASQA). The segment at 512–865 (PARTLPFTTG…VAALLGNRVD (354 aa)) is histone deacetylase. Zn(2+) contacts are provided by C533, C535, and H541. S595 carries the phosphoserine modification. C618 is a Zn(2+) binding site. H670 is a catalytic residue. The interval 877 to 952 (NLNAIRSLEA…LVEEEEPMNL (76 aa)) is interaction with SIN3A. A Nuclear export signal motif is present at residues 917 to 952 (KEEVEAVTALASLSVGILAEDRPSEQLVEEEEPMNL).

It belongs to the histone deacetylase family. HD type 2 subfamily. As to quaternary structure, interacts with HDAC1, HDAC2, HDAC3, HDAC4, HDAC5, NCOR1, NCOR2, SIN3A, SIN3B, RBBP4, RBBP7, MTA1L1, SAP30 and MBD3. Interacts with KAT5 and EDNRA. Interacts with the 14-3-3 protein YWHAE, MEF2A, MEF2B and MEF2C. Interacts with ZMYND15. Interacts with KDM5B. Interacts with PML. Interacts with FOXP3. Interacts with RARA. May be phosphorylated by CaMK1. Phosphorylated by the PKC kinases PKN1 and PKN2, impairing nuclear import. Phosphorylation at Ser-155 by MARK2, MARK3 and PRKD1 promotes interaction with 14-3-3 proteins and export from the nucleus. Phosphorylation at Ser-155 is a prerequisite for phosphorylation at Ser-181.

It localises to the nucleus. Its subcellular location is the cytoplasm. The catalysed reaction is N(6)-acetyl-L-lysyl-[histone] + H2O = L-lysyl-[histone] + acetate. It catalyses the reaction N(6)-acetyl-L-lysyl-[protein] + H2O = L-lysyl-[protein] + acetate. Responsible for the deacetylation of lysine residues on the N-terminal part of the core histones (H2A, H2B, H3 and H4). Histone deacetylation gives a tag for epigenetic repression and plays an important role in transcriptional regulation, cell cycle progression and developmental events. Histone deacetylases act via the formation of large multiprotein complexes. Involved in muscle maturation by repressing transcription of myocyte enhancer factors such as MEF2A, MEF2B and MEF2C. During muscle differentiation, it shuttles into the cytoplasm, allowing the expression of myocyte enhancer factors. May be involved in Epstein-Barr virus (EBV) latency, possibly by repressing the viral BZLF1 gene. Positively regulates the transcriptional repressor activity of FOXP3. Serves as a corepressor of RARA, causing its deacetylation and inhibition of RARE DNA element binding. In association with RARA, plays a role in the repression of microRNA-10a and thereby in the inflammatory response. Also acetylates non-histone proteins, such as ALKBH5. In Homo sapiens (Human), this protein is Histone deacetylase 7 (HDAC7).